The chain runs to 128 residues: UPF0325 protein CKO_03204 (128 aa).

Belongs to the UPF0325 family.

The protein is UPF0325 protein CKO_03204 of Citrobacter koseri (strain ATCC BAA-895 / CDC 4225-83 / SGSC4696).